Here is a 122-residue protein sequence, read N- to C-terminus: Large ribosomal subunit protein uL14c (122 aa).

The protein belongs to the universal ribosomal protein uL14 family. In terms of assembly, part of the 50S ribosomal subunit.

The protein resides in the plastid. It localises to the chloroplast. In terms of biological role, binds to 23S rRNA. The protein is Large ribosomal subunit protein uL14c of Amborella trichopoda.